We begin with the raw amino-acid sequence, 87 residues long: Small ribosomal subunit protein bS16 (87 aa).

It belongs to the bacterial ribosomal protein bS16 family.

This is Small ribosomal subunit protein bS16 from Desulfatibacillum aliphaticivorans.